Consider the following 368-residue polypeptide: Aminomethyltransferase (368 aa).

Belongs to the GcvT family. In terms of assembly, the glycine cleavage system is composed of four proteins: P, T, L and H.

It catalyses the reaction N(6)-[(R)-S(8)-aminomethyldihydrolipoyl]-L-lysyl-[protein] + (6S)-5,6,7,8-tetrahydrofolate = N(6)-[(R)-dihydrolipoyl]-L-lysyl-[protein] + (6R)-5,10-methylene-5,6,7,8-tetrahydrofolate + NH4(+). In terms of biological role, the glycine cleavage system catalyzes the degradation of glycine. This chain is Aminomethyltransferase, found in Xylella fastidiosa (strain M12).